We begin with the raw amino-acid sequence, 103 residues long: UPF0145 protein EF_0241 (103 aa).

This sequence belongs to the UPF0145 family.

The sequence is that of UPF0145 protein EF_0241 from Enterococcus faecalis (strain ATCC 700802 / V583).